The chain runs to 291 residues: N-acetylmannosamine kinase (291 aa).

Residues 5–12 and 132–139 each bind ATP; these read AIDIGGTK and GVGGGVVC. Positions 156, 166, 168, and 173 each coordinate Zn(2+).

This sequence belongs to the ROK (NagC/XylR) family. NanK subfamily. In terms of assembly, homodimer.

It carries out the reaction an N-acyl-D-mannosamine + ATP = an N-acyl-D-mannosamine 6-phosphate + ADP + H(+). Its pathway is amino-sugar metabolism; N-acetylneuraminate degradation; D-fructose 6-phosphate from N-acetylneuraminate: step 2/5. In terms of biological role, catalyzes the phosphorylation of N-acetylmannosamine (ManNAc) to ManNAc-6-P. The sequence is that of N-acetylmannosamine kinase from Salmonella heidelberg (strain SL476).